The chain runs to 421 residues: Synaptotagmin-12 (421 aa).

At Met-1–Gly-18 the chain is on the vesicular side. The helical transmembrane segment at Trp-19 to Leu-39 threads the bilayer. At Trp-40–Asn-421 the chain is on the cytoplasmic side. A Phosphoserine; by PKA modification is found at Ser-97. 2 positions are modified to phosphoserine: Ser-99 and Ser-214. C2 domains follow at residues Thr-152–Leu-272 and Ala-283–His-416.

The protein belongs to the synaptotagmin family. As to quaternary structure, homodimer. Can also form heterodimers. Interacts with SYT1. In terms of processing, phosphorylation of Ser-97 is required for mossy-fiber long-term potentiation. In terms of tissue distribution, expressed in the brain, specifically by neurons in the hippocampus, and in the adrenal medulla (at protein level).

The protein resides in the cytoplasmic vesicle. It localises to the secretory vesicle. The protein localises to the synaptic vesicle membrane. In terms of biological role, synaptic vesicle phosphoprotein that enhances spontaneous neurotransmitter release but does not effect induced neurotransmitter release. Unlike other synaptotagmins, it does not bind Ca(2+) or phospholipids. Essential for mossy-fiber long-term potentiation in the hippocampus. This is Synaptotagmin-12 from Mus musculus (Mouse).